Here is a 123-residue protein sequence, read N- to C-terminus: Small ribosomal subunit protein uS12cz/uS12cy (123 aa).

The protein belongs to the universal ribosomal protein uS12 family. As to quaternary structure, part of the 30S ribosomal subunit.

It localises to the plastid. The protein localises to the chloroplast. Its function is as follows. With S4 and S5 plays an important role in translational accuracy. Located at the interface of the 30S and 50S subunits. The chain is Small ribosomal subunit protein uS12cz/uS12cy (rps12-A) from Angiopteris evecta (Mule's foot fern).